Here is a 207-residue protein sequence, read N- to C-terminus: Interleukin-6 (207 aa).

The signal sequence occupies residues 1-20; sequence MNSLSTSAFSLGLLLVMATA. Cys-67 and Cys-73 are oxidised to a cystine. Ser-76 carries the phosphoserine modification. A disulfide bond links Cys-96 and Cys-106.

This sequence belongs to the IL-6 superfamily. Component of a hexamer of two molecules each of IL6, IL6R and IL6ST; first binds to IL6R to associate with the signaling subunit IL6ST. Interacts with IL6R (via the N-terminal ectodomain); this interaction may be affected by IL6R-binding with SORL1, hence decreasing IL6 cis signaling. Interacts with SORL1 (via the N-terminal ectodomain); this interaction leads to IL6 internalization and lysosomal degradation. May form a trimeric complex with the soluble SORL1 ectodomain and soluble IL6R receptor; this interaction might stabilize circulating IL6, hence promoting IL6 trans signaling.

The protein resides in the secreted. Functionally, cytokine with a wide variety of biological functions in immunity, tissue regeneration, and metabolism. Binds to IL6R, then the complex associates to the signaling subunit IL6ST/gp130 to trigger the intracellular IL6-signaling pathway. The interaction with the membrane-bound IL6R and IL6ST stimulates 'classic signaling', whereas the binding of IL6 and soluble IL6R to IL6ST stimulates 'trans-signaling'. Alternatively, 'cluster signaling' occurs when membrane-bound IL6:IL6R complexes on transmitter cells activate IL6ST receptors on neighboring receiver cells. In terms of biological role, IL6 is a potent inducer of the acute phase response. Rapid production of IL6 contributes to host defense during infection and tissue injury, but excessive IL6 synthesis is involved in disease pathology. In the innate immune response, is synthesized by myeloid cells, such as macrophages and dendritic cells, upon recognition of pathogens through toll-like receptors (TLRs) at the site of infection or tissue injury. In the adaptive immune response, is required for the differentiation of B cells into immunoglobulin-secreting cells. Plays a major role in the differentiation of CD4(+) T cell subsets. Essential factor for the development of T follicular helper (Tfh) cells that are required for the induction of germinal-center formation. Required to drive naive CD4(+) T cells to the Th17 lineage. Also required for proliferation of myeloma cells and the survival of plasmablast cells. Acts as an essential factor in bone homeostasis and on vessels directly or indirectly by induction of VEGF, resulting in increased angiogenesis activity and vascular permeability. Induces, through 'trans-signaling' and synergistically with IL1B and TNF, the production of VEGF. Involved in metabolic controls, is discharged into the bloodstream after muscle contraction increasing lipolysis and improving insulin resistance. 'Trans-signaling' in central nervous system also regulates energy and glucose homeostasis. Mediates, through GLP-1, crosstalk between insulin-sensitive tissues, intestinal L cells and pancreatic islets to adapt to changes in insulin demand. Also acts as a myokine. Plays a protective role during liver injury, being required for maintenance of tissue regeneration. Also has a pivotal role in iron metabolism by regulating HAMP/hepcidin expression upon inflammation or bacterial infection. Through activation of IL6ST-YAP-NOTCH pathway, induces inflammation-induced epithelial regeneration. This Canis lupus familiaris (Dog) protein is Interleukin-6 (IL6).